Reading from the N-terminus, the 295-residue chain is Small ribosomal subunit protein uS2 (295 aa).

The interval 263 to 295 (KKFSKTKNIDEETNTEFEQALNDADENKNSDNA) is disordered.

The protein belongs to the universal ribosomal protein uS2 family.

The sequence is that of Small ribosomal subunit protein uS2 from Rickettsia massiliae (strain Mtu5).